The following is a 708-amino-acid chain: MATTAELFEEPFVADEYIERLVWRTPGGGSRGGPEAFDPKRLLEEFVNHIQELQIMDERIQRKVEKLEQQCQKEAKEFAKKVQELQKSNQVAFQHFQELDEHISYVATKVCHLGDQLEGVNTPRQRAVEAQKLMKYFNEFLDGELKSDVFTNSEKIKEAADIIQKLHLIAQELPFDRFSEVKSKIASKYHDLECQLIQEFTSAQRRGEISRMREVAAVLLHFKGYSHCVDVYIKQCQEGAYLRNDIFEDAGILCQRVNKQVGDIFSNPETVLAKLIQNVFEIKLQSFVKEQLEECRKSDAEQYLKNLYDLYTRTTNLSSKLMEFNLGTDKQTFLSKLIKSIFISYLENYIEVETGYLKSRSAMILQRYYDSKNHQKRSIGTGGIQDLKERIRQRTNLPLGPSIDTHGETFLSQEVVVNLLQETKQAFERCHRLSDPSDLPRNAFRIFTILVEFLCIEHIDYALETGLAGIPSSDSRNANLYFLDVVQQANTIFHLFDKQFNDHLMPLISSSPKLSECLQKKKEIIEQMEMKLDTGIDRTLNCMIGQMKHILAAEQKKTDFKPEDENNVLIQYTNACVKVCAYVRKQVEKIKNSMDGKNVDTVLMELGVRFHRLIYEHLQQYSYSCMGGMLAICDVAEYRKCAKDFKIPMVLHLFDTLHALCNLLVVAPDNLKQVCSGEQLANLDKNILHSFVQLRADYRSARLARHFS.

N-acetylalanine is present on alanine 2. Residues 40 to 101 (KRLLEEFVNH…AFQHFQELDE (62 aa)) adopt a coiled-coil conformation. 3 positions are modified to phosphothreonine: threonine 122, threonine 395, and threonine 405. Serine 412 is subject to Phosphoserine.

The protein belongs to the SEC10 family. In terms of assembly, the exocyst complex is composed of EXOC1, EXOC2, EXOC3, EXOC4, EXOC5, EXOC6, EXOC7 and EXOC8. Interacts with EXOC3L1. In terms of tissue distribution, ubiquitous.

The protein localises to the cytoplasm. It is found in the midbody. Its function is as follows. Component of the exocyst complex involved in the docking of exocytic vesicles with fusion sites on the plasma membrane. The chain is Exocyst complex component 5 (EXOC5) from Homo sapiens (Human).